We begin with the raw amino-acid sequence, 381 residues long: GDSL esterase/lipase At3g48460 (381 aa).

Positions 1-26 (MSSSISPLLTTAISVAILLFSTISTA) are cleaved as a signal peptide. The active-site Nucleophile is serine 45. N-linked (GlcNAc...) asparagine glycans are attached at residues asparagine 112, asparagine 140, and asparagine 258. Catalysis depends on residues aspartate 344 and histidine 347.

Belongs to the 'GDSL' lipolytic enzyme family.

It is found in the secreted. This Arabidopsis thaliana (Mouse-ear cress) protein is GDSL esterase/lipase At3g48460.